The chain runs to 345 residues: Flap endonuclease 1 (345 aa).

The N-domain stretch occupies residues 1 to 103 (MGIKQLSKLL…KELEKRKERR (103 aa)). Asp-34 contributes to the Mg(2+) binding site. Arg-47 and Arg-69 together coordinate DNA. Residues Asp-85, Glu-157, Glu-159, Asp-178, and Asp-180 each coordinate Mg(2+). Positions 121 to 252 (LMEMYDKRKT…KKALGLIKKH (132 aa)) are I-domain. Glu-157 provides a ligand contact to DNA. 2 residues coordinate DNA: Gly-230 and Asp-232. Asp-232 is a Mg(2+) binding site. Residues 333-341 (TQGRLDCFI) form an interaction with PCNA region.

Belongs to the XPG/RAD2 endonuclease family. FEN1 subfamily. Interacts with PCNA. Three molecules of FEN1 bind to one PCNA trimer with each molecule binding to one PCNA monomer. PCNA stimulates the nuclease activity without altering cleavage specificity. Mg(2+) serves as cofactor. In terms of processing, phosphorylated. Phosphorylation upon DNA damage induces relocalization to the nuclear plasma.

It localises to the nucleus. Its subcellular location is the nucleolus. The protein resides in the nucleoplasm. It is found in the mitochondrion. In terms of biological role, structure-specific nuclease with 5'-flap endonuclease and 5'-3' exonuclease activities involved in DNA replication and repair. During DNA replication, cleaves the 5'-overhanging flap structure that is generated by displacement synthesis when DNA polymerase encounters the 5'-end of a downstream Okazaki fragment. It enters the flap from the 5'-end and then tracks to cleave the flap base, leaving a nick for ligation. Also involved in the long patch base excision repair (LP-BER) pathway, by cleaving within the apurinic/apyrimidinic (AP) site-terminated flap. Acts as a genome stabilization factor that prevents flaps from equilibrating into structures that lead to duplications and deletions. Also possesses 5'-3' exonuclease activity on nicked or gapped double-stranded DNA, and exhibits RNase H activity. Also involved in replication and repair of rDNA and in repairing mitochondrial DNA. The protein is Flap endonuclease 1 of Encephalitozoon cuniculi (strain GB-M1) (Microsporidian parasite).